The following is a 387-amino-acid chain: Anhydro-N-acetylmuramic acid kinase (387 aa).

17–24 (GTSMDGVD) serves as a coordination point for ATP.

This sequence belongs to the anhydro-N-acetylmuramic acid kinase family.

The catalysed reaction is 1,6-anhydro-N-acetyl-beta-muramate + ATP + H2O = N-acetyl-D-muramate 6-phosphate + ADP + H(+). It functions in the pathway amino-sugar metabolism; 1,6-anhydro-N-acetylmuramate degradation. The protein operates within cell wall biogenesis; peptidoglycan recycling. Catalyzes the specific phosphorylation of 1,6-anhydro-N-acetylmuramic acid (anhMurNAc) with the simultaneous cleavage of the 1,6-anhydro ring, generating MurNAc-6-P. Is required for the utilization of anhMurNAc either imported from the medium or derived from its own cell wall murein, and thus plays a role in cell wall recycling. The polypeptide is Anhydro-N-acetylmuramic acid kinase (Burkholderia mallei (strain ATCC 23344)).